Consider the following 280-residue polypeptide: Thioredoxin-related transmembrane protein 1 (280 aa).

An N-terminal signal peptide occupies residues 1–26 (MAPSGSLAVPLAVLVLLLWGAPWTHG). Residues 27–132 (RRSNVRVITD…FINFISDKEW (106 aa)) form the Thioredoxin domain. Residues 27–180 (RRSNVRVITD…EDLGLPVWGS (154 aa)) are Extracellular-facing. Active-site nucleophile residues include Cys-56 and Cys-59. Cys-56 and Cys-59 form a disulfide bridge. A helical membrane pass occupies residues 181–203 (YTVFALATLFSGLLLGLCMIFVA). The Cytoplasmic portion of the chain corresponds to 204-280 (DCLCPSKRRR…LGPSLATDKS (77 aa)). 2 S-palmitoyl cysteine lipidation sites follow: Cys-205 and Cys-207. Residues 218-280 (PYPSKKLLSE…LGPSLATDKS (63 aa)) form a disordered region. A phosphoserine mark is found at Ser-228, Ser-247, Ser-270, Ser-274, and Ser-280. A compositionally biased stretch (acidic residues) spans 237 to 252 (EEQEADEEDVSEEEAE).

As to quaternary structure, interacts with ATP2A2. Post-translationally, palmitoylated; palmitoylation is required for localization to mitochondria-associated endoplasmic reticulum membrane (MAM). As to expression, ubiquitous. Highly expressed in kidney, liver, placenta and lung.

It is found in the endoplasmic reticulum membrane. The protein localises to the mitochondrion membrane. Its subcellular location is the secreted. It catalyses the reaction Catalyzes the rearrangement of -S-S- bonds in proteins.. Its function is as follows. Thiredoxin domain-containing protein that participates in various redox reactions through the reversible oxidation of its active center dithiol to a disulfide and catalyze dithiol-disulfide exchange reactions. Acts as a key inhibitor of the alternative triglyceride biosynthesis pathway by inhibiting the activity of TMEM68/DIESL at the endoplasmic reticulum, thereby restricting accumulation of triacylglycerol. The alternative triglyceride biosynthesis pathway mediates formation of triacylglycerol from diacylglycerol and membrane phospholipids. Acts as a protein disulfide isomerase by catalyzing formation or reduction of disulfide bonds. Specifically mediates formation of disulfide bonds of transmembrane proteins at the endoplasmic reticulum membrane. Involved in endoplasmic reticulum-associated degradation (ERAD) via its protein disulfide isomerase activity by acting on folding-defective polypeptides at the endoplasmic reticulum membrane. Acts as a negative regulator of platelet aggregation following secretion in the extracellular space. Acts as a regulator of endoplasmic reticulum-mitochondria contact sites via its ability to regulate redox signals. Regulates endoplasmic reticulum-mitochondria Ca(2+) flux. The polypeptide is Thioredoxin-related transmembrane protein 1 (Homo sapiens (Human)).